Here is a 257-residue protein sequence, read N- to C-terminus: Imidazole glycerol phosphate synthase subunit HisF (257 aa).

Active-site residues include Asp11 and Asp130.

Belongs to the HisA/HisF family. As to quaternary structure, heterodimer of HisH and HisF.

It localises to the cytoplasm. The catalysed reaction is 5-[(5-phospho-1-deoxy-D-ribulos-1-ylimino)methylamino]-1-(5-phospho-beta-D-ribosyl)imidazole-4-carboxamide + L-glutamine = D-erythro-1-(imidazol-4-yl)glycerol 3-phosphate + 5-amino-1-(5-phospho-beta-D-ribosyl)imidazole-4-carboxamide + L-glutamate + H(+). Its pathway is amino-acid biosynthesis; L-histidine biosynthesis; L-histidine from 5-phospho-alpha-D-ribose 1-diphosphate: step 5/9. In terms of biological role, IGPS catalyzes the conversion of PRFAR and glutamine to IGP, AICAR and glutamate. The HisF subunit catalyzes the cyclization activity that produces IGP and AICAR from PRFAR using the ammonia provided by the HisH subunit. The chain is Imidazole glycerol phosphate synthase subunit HisF from Vibrio parahaemolyticus serotype O3:K6 (strain RIMD 2210633).